Consider the following 639-residue polypeptide: Poly(A)-specific ribonuclease PARN (639 aa).

A divalent metal cation-binding residues include Asp-28 and Glu-30. A phosphoserine mark is found at Ser-163 and Ser-167. The R3H domain occupies 178–245 (KKFIDQVVEK…ERYIVISKVD (68 aa)). At Lys-220 the chain carries N6-acetyllysine. Residues Asp-292 and Asp-382 each coordinate a divalent metal cation. Residue Lys-499 is modified to N6-acetyllysine. Residue Ser-530 is modified to Phosphoserine. Phosphoserine; by MAPKAPK2 is present on Ser-557. The disordered stretch occupies residues 563–611 (TVGKRNLSPSQEEAGLEDGVSGEISDTELEQTDSCAEPLSEGRKKAKKL). Residues Ser-583, Ser-587, Ser-619, Ser-623, and Ser-628 each carry the phosphoserine modification. A Phosphothreonine modification is found at Thr-631.

It belongs to the CAF1 family. As to quaternary structure, homodimer. Found in a mRNA decay complex with RENT1, RENT2 and RENT3B. Interacts with KHSRP. Interacts with CELF1/CUGBP1. Interacts with ZC3HAV1 in an RNA-independent manner. Interacts with DHX36. It depends on Mg(2+) as a cofactor. Phosphorylation by MAPKAPK2, preventing GADD45A mRNA degradation after genotoxic stress.

The protein resides in the nucleus. Its subcellular location is the cytoplasm. It is found in the nucleolus. It carries out the reaction Exonucleolytic cleavage of poly(A) to 5'-AMP.. 3'-exoribonuclease that has a preference for poly(A) tails of mRNAs, thereby efficiently degrading poly(A) tails. Exonucleolytic degradation of the poly(A) tail is often the first step in the decay of eukaryotic mRNAs and is also used to silence certain maternal mRNAs translationally during oocyte maturation and early embryonic development. Interacts with both the 3'-end poly(A) tail and the 5'-end cap structure during degradation, the interaction with the cap structure being required for an efficient degradation of poly(A) tails. Involved in nonsense-mediated mRNA decay, a critical process of selective degradation of mRNAs that contain premature stop codons. Also involved in degradation of inherently unstable mRNAs that contain AU-rich elements (AREs) in their 3'-UTR, possibly via its interaction with KHSRP. Probably mediates the removal of poly(A) tails of AREs mRNAs, which constitutes the first step of destabilization. Also able to recognize poly(A) tails of microRNAs such as MIR21 and H/ACA box snoRNAs (small nucleolar RNAs) leading to microRNAs degradation or snoRNA increased stability. The chain is Poly(A)-specific ribonuclease PARN (PARN) from Pongo abelii (Sumatran orangutan).